A 640-amino-acid chain; its full sequence is Biosynthetic arginine decarboxylase (640 aa).

K105 carries the post-translational modification N6-(pyridoxal phosphate)lysine. F290 to Y300 contributes to the substrate binding site.

Belongs to the Orn/Lys/Arg decarboxylase class-II family. SpeA subfamily. Requires Mg(2+) as cofactor. Pyridoxal 5'-phosphate serves as cofactor.

The enzyme catalyses L-arginine + H(+) = agmatine + CO2. Its function is as follows. Catalyzes the biosynthesis of agmatine from arginine. This Vibrio cholerae serotype O1 (strain ATCC 39315 / El Tor Inaba N16961) protein is Biosynthetic arginine decarboxylase.